The following is a 219-amino-acid chain: Non-specific lipid transfer protein GPI-anchored 25 (219 aa).

Positions 1–22 (MATKITGVFILILTITFSSSSA) are cleaved as a signal peptide. 4 disulfides stabilise this stretch: cysteine 39–cysteine 85, cysteine 49–cysteine 68, cysteine 69–cysteine 110, and cysteine 83–cysteine 123. Residue asparagine 59 is glycosylated (N-linked (GlcNAc...) asparagine). The N-linked (GlcNAc...) asparagine glycan is linked to asparagine 148. A disordered region spans residues 152 to 181 (SPQSVDLAPEVSPSSDLFSPETATLAPPPP). The GPI-anchor amidated serine moiety is linked to residue serine 192. A propeptide spans 193–219 (SDSLKIRNFWFPSTIIMTFATSILARI) (removed in mature form).

Belongs to the plant LTP family.

It localises to the cell membrane. Probable lipid transfer protein. The sequence is that of Non-specific lipid transfer protein GPI-anchored 25 from Arabidopsis thaliana (Mouse-ear cress).